The primary structure comprises 149 residues: Ribosome maturation factor RimP (149 aa).

Belongs to the RimP family.

The protein resides in the cytoplasm. Functionally, required for maturation of 30S ribosomal subunits. The polypeptide is Ribosome maturation factor RimP (Neisseria meningitidis serogroup A / serotype 4A (strain DSM 15465 / Z2491)).